Reading from the N-terminus, the 120-residue chain is Holo-[acyl-carrier-protein] synthase (120 aa).

Residues Asp6 and Glu55 each coordinate Mg(2+).

It belongs to the P-Pant transferase superfamily. AcpS family. Mg(2+) serves as cofactor.

It is found in the cytoplasm. The catalysed reaction is apo-[ACP] + CoA = holo-[ACP] + adenosine 3',5'-bisphosphate + H(+). Functionally, transfers the 4'-phosphopantetheine moiety from coenzyme A to a Ser of acyl-carrier-protein. The sequence is that of Holo-[acyl-carrier-protein] synthase from Pelodictyon phaeoclathratiforme (strain DSM 5477 / BU-1).